The primary structure comprises 202 residues: Thymidylate kinase (202 aa).

ATP is bound at residue 7-14 (GIDGSGKT).

This sequence belongs to the thymidylate kinase family.

It catalyses the reaction dTMP + ATP = dTDP + ADP. Its function is as follows. Phosphorylation of dTMP to form dTDP in both de novo and salvage pathways of dTTP synthesis. The chain is Thymidylate kinase from Ehrlichia ruminantium (strain Gardel).